Reading from the N-terminus, the 462-residue chain is Chromosomal replication initiator protein DnaA (462 aa).

The segment at 1-84 (MAVSLWQQCI…RFDIGSRPSA (84 aa)) is domain I, interacts with DnaA modulators. Residues 84-125 (APKPIQATAAVVKPKLESSPQKSQTSFNVNAPEPAATANHRS) are domain II. Residues 126 to 342 (NINPTYQFEN…GALNRVIANA (217 aa)) are domain III, AAA+ region. Residues G170, G172, K173, and T174 each contribute to the ATP site. Positions 343-462 (NFTGRPITID…YANLIRTLSS (120 aa)) are domain IV, binds dsDNA.

It belongs to the DnaA family. In terms of assembly, oligomerizes as a right-handed, spiral filament on DNA at oriC.

Its subcellular location is the cytoplasm. In terms of biological role, plays an essential role in the initiation and regulation of chromosomal replication. ATP-DnaA binds to the origin of replication (oriC) to initiate formation of the DNA replication initiation complex once per cell cycle. Binds the DnaA box (a 9 base pair repeat at the origin) and separates the double-stranded (ds)DNA. Forms a right-handed helical filament on oriC DNA; dsDNA binds to the exterior of the filament while single-stranded (ss)DNA is stabiized in the filament's interior. The ATP-DnaA-oriC complex binds and stabilizes one strand of the AT-rich DNA unwinding element (DUE), permitting loading of DNA polymerase. After initiation quickly degrades to an ADP-DnaA complex that is not apt for DNA replication. Binds acidic phospholipids. The protein is Chromosomal replication initiator protein DnaA of Shewanella woodyi (strain ATCC 51908 / MS32).